We begin with the raw amino-acid sequence, 111 residues long: MAGKQAVSASGKWLDGIRKWYYNAAGFNKLGLMRDDTIYEDEDVKEAIRRLPENLYNDRMFRIKRALDLNLKHQILPKEQWTKYEEENFYLEPYLKEVIRERKEREEWAKK.

Alanine 2 bears the N-acetylalanine mark. At lysine 12 the chain carries N6-acetyllysine; alternate. Lysine 12 is subject to N6-succinyllysine; alternate. Lysine 19 carries the N6-acetyllysine modification. Lysine 78 is modified (N6-acetyllysine; alternate). Lysine 78 bears the N6-succinyllysine; alternate mark. An N6-acetyllysine mark is found at lysine 83 and lysine 96.

This sequence belongs to the UQCRB/QCR7 family. As to quaternary structure, component of the ubiquinol-cytochrome c oxidoreductase (cytochrome b-c1 complex, complex III, CIII), a multisubunit enzyme composed of 11 subunits. The complex is composed of 3 respiratory subunits cytochrome b, cytochrome c1 and Rieske protein UQCRFS1, 2 core protein subunits UQCRC1/QCR1 and UQCRC2/QCR2, and 6 low-molecular weight protein subunits UQCRH/QCR6, UQCRB/QCR7, UQCRQ/QCR8, UQCR10/QCR9, UQCR11/QCR10 and subunit 9, the cleavage product of Rieske protein UQCRFS1. The complex exists as an obligatory dimer and forms supercomplexes (SCs) in the inner mitochondrial membrane with NADH-ubiquinone oxidoreductase (complex I, CI) and cytochrome c oxidase (complex IV, CIV), resulting in different assemblies (supercomplex SCI(1)III(2)IV(1) and megacomplex MCI(2)III(2)IV(2)).

Its subcellular location is the mitochondrion inner membrane. Its function is as follows. Component of the ubiquinol-cytochrome c oxidoreductase, a multisubunit transmembrane complex that is part of the mitochondrial electron transport chain which drives oxidative phosphorylation. The respiratory chain contains 3 multisubunit complexes succinate dehydrogenase (complex II, CII), ubiquinol-cytochrome c oxidoreductase (cytochrome b-c1 complex, complex III, CIII) and cytochrome c oxidase (complex IV, CIV), that cooperate to transfer electrons derived from NADH and succinate to molecular oxygen, creating an electrochemical gradient over the inner membrane that drives transmembrane transport and the ATP synthase. The cytochrome b-c1 complex catalyzes electron transfer from ubiquinol to cytochrome c, linking this redox reaction to translocation of protons across the mitochondrial inner membrane, with protons being carried across the membrane as hydrogens on the quinol. In the process called Q cycle, 2 protons are consumed from the matrix, 4 protons are released into the intermembrane space and 2 electrons are passed to cytochrome c. This Homo sapiens (Human) protein is Cytochrome b-c1 complex subunit 7 (UQCRB).